The chain runs to 337 residues: Trace amine-associated receptor 5 (337 aa).

Residues 1–34 (MRAVFIQGAEEHPAAFCYQVNGSCPRTVHTLGIQ) lie on the Extracellular side of the membrane. The N-linked (GlcNAc...) asparagine glycan is linked to Asn21. Intrachain disulfides connect Cys24–Cys188 and Cys99–Cys192. The chain crosses the membrane as a helical span at residues 35-55 (LVIYLACAAGMLIIVLGNVFV). Over 56–70 (AFAVSYFKALHTPTN) the chain is Cytoplasmic. Residues 71-91 (FLLLSLALADMFLGLLVLPLS) traverse the membrane as a helical segment. The Extracellular portion of the chain corresponds to 92–109 (TIRSVESCWFFGDFLCRL). Residues 110-130 (HTYLDTLFCLTSIFHLCFISI) traverse the membrane as a helical segment. At 131-154 (DRHCAICDPLLYPSKFTVRVALRY) the chain is on the cytoplasmic side. A helical transmembrane segment spans residues 155-175 (ILAGWGVPAAYTSLFLYTDVV). The interval 176–189 (ETRLSQWLEEMPCV) is extracellular Loop 2 (ECL2). At 176–204 (ETRLSQWLEEMPCVGSCQLLLNKFWGWLN) the chain is on the extracellular side. A helical membrane pass occupies residues 205–225 (FPLFFVPCLIMISLYVKIFVV). Over 226 to 253 (ATRQAQQITTLSKSLAGAAKHERKAAKT) the chain is Cytoplasmic. Residues 254–274 (LGIAVGIYLLCWLPFTIDTMV) traverse the membrane as a helical segment. Residues 275–284 (DSLLHFITPP) lie on the Extracellular side of the membrane. Residues 285-307 (LVFDIFIWFAYFNSACNPIIYVF) form a helical membrane-spanning segment. Over 308–337 (SYQWFRKALKLTLSQKVFSPQTRTVDLYQE) the chain is Cytoplasmic.

The protein belongs to the G-protein coupled receptor 1 family. As to expression, expressed almost exclusively in skeletal muscle and selected areas of the brain, such amygdala, hippocampus, caudate nucleus, thalamus and hypothalamus. Weak expression is also find in substantia nigra.

Its subcellular location is the cell membrane. In terms of biological role, olfactory receptor specific for trimethylamine, a trace amine. Also activated at lower level by dimethylethylamine. Trimethylamine is a bacterial metabolite found in some animal odors, and to humans it is a repulsive odor associated with bad breath and spoiled food. Trimethylamine-binding causes a conformation change that triggers signaling via G(s)-class of G alpha proteins (GNAL or GNAS). The protein is Trace amine-associated receptor 5 of Homo sapiens (Human).